Here is a 904-residue protein sequence, read N- to C-terminus: Transcription factor E2F7 (904 aa).

Residues 61 to 80 (TPDRNPITPVKPVDRQPQVE) form a disordered region. S96 carries the post-translational modification Phosphoserine. A DNA-binding region spans residues 143–212 (RKQKSLGLLC…VAKNQYGWHG (70 aa)). The segment covering 252–269 (GERRKDGSPDPRDPHLLD) has biased composition (basic and acidic residues). Residues 252–283 (GERRKDGSPDPRDPHLLDFSEADYPSSSANSR) are disordered. A DNA-binding region spans residues 283-368 (RKDKSLRIMS…GRKPAFKWIG (86 aa)). The residue at position 411 (S411) is a Phosphoserine. The disordered stretch occupies residues 560–628 (LSPESRSEED…VMPKKPSSST (69 aa)). Position 833 is a phosphoserine (S833). The segment at 846–904 (AEQSPAPATPKSIQRRHRETFFKTPGSLGDPVFRRKERNQSRNTSSAQRRLEISSSGPD) is disordered. The span at 886–904 (SRNTSSAQRRLEISSSGPD) shows a compositional bias: polar residues.

This sequence belongs to the E2F/DP family. As to quaternary structure, interacts with HIF1A. Homodimer and heterodimer: mainly forms homodimers and, to a lesser extent, heterodimers with E2F8. Dimerization is important for DNA-binding. Interacts with MN1. Widely expressed with highest levels in skin and thymus and very low levels in brain, muscle and stomach. Expressed in trophoblast giant cells throughout placenta development (at protein level).

It localises to the nucleus. Atypical E2F transcription factor that participates in various processes such as angiogenesis, polyploidization of specialized cells and DNA damage response. Mainly acts as a transcription repressor that binds DNA independently of DP proteins and specifically recognizes the E2 recognition site 5'-TTTC[CG]CGC-3'. Directly represses transcription of classical E2F transcription factors such as E2F1. Acts as a regulator of S-phase by recognizing and binding the E2-related site 5'-TTCCCGCC-3' and mediating repression of G1/S-regulated genes. Plays a key role in polyploidization of cells in placenta and liver by regulating the endocycle, probably by repressing genes promoting cytokinesis and antagonizing action of classical E2F proteins (E2F1, E2F2 and/or E2F3). Required for placental development by promoting polyploidization of trophoblast giant cells. Also involved in DNA damage response: up-regulated by p53/TP53 following genotoxic stress and acts as a downstream effector of p53/TP53-dependent repression by mediating repression of indirect p53/TP53 target genes involved in DNA replication. Acts as a promoter of sprouting angiogenesis, possibly by acting as a transcription activator: associates with HIF1A, recognizes and binds the VEGFA promoter, which is different from canonical E2 recognition site, and activates expression of the VEGFA gene. Acts as a negative regulator of keratinocyte differentiation. This chain is Transcription factor E2F7 (E2f7), found in Mus musculus (Mouse).